Here is a 376-residue protein sequence, read N- to C-terminus: Putative peptide import ATP-binding protein BMEII0205 (376 aa).

The interval 1-25 (MPLRPALHLRTGKLRQTPTHNEPDG) is disordered. An ABC transporter domain is found at 64-314 (VRTDDLVRDF…PLHPYSRALL (251 aa)). 106–113 (GESGSGKS) contributes to the ATP binding site.

It belongs to the ABC transporter superfamily. The complex is composed of two ATP-binding proteins (BMEII0205 and BMEII0206), two transmembrane proteins (BMEII0207/BMEII0208 and BMEII0209) and a solute-binding protein (BMEII0210).

The protein localises to the cell inner membrane. Its function is as follows. Probably part of an ABC transporter complex that could be involved in peptide import. Probably responsible for energy coupling to the transport system. This is Putative peptide import ATP-binding protein BMEII0205 from Brucella melitensis biotype 1 (strain ATCC 23456 / CCUG 17765 / NCTC 10094 / 16M).